We begin with the raw amino-acid sequence, 230 residues long: Ribonuclease HII (230 aa).

Positions 1 to 224 (MIIIGIDEAG…CKRILDKSKQ (224 aa)) constitute an RNase H type-2 domain. 3 residues coordinate a divalent metal cation: Asp7, Glu8, and Asp112.

It belongs to the RNase HII family. Mn(2+) is required as a cofactor. Mg(2+) serves as cofactor.

The protein resides in the cytoplasm. It carries out the reaction Endonucleolytic cleavage to 5'-phosphomonoester.. Endonuclease that specifically degrades the RNA of RNA-DNA hybrids. The polypeptide is Ribonuclease HII (rnhB) (Methanocaldococcus jannaschii (strain ATCC 43067 / DSM 2661 / JAL-1 / JCM 10045 / NBRC 100440) (Methanococcus jannaschii)).